The sequence spans 260 residues: Snake venom serine protease homolog (260 aa).

An N-terminal signal peptide occupies residues 1-18; it reads MVLIRVLANLLILQLSYA. Residues 19–24 constitute a propeptide that is removed on maturation; that stretch reads QKASEL. Residues 25-251 enclose the Peptidase S1 domain; it reads IIGGDECNIN…YTEWIRSIIA (227 aa). 6 disulfides stabilise this stretch: Cys-31–Cys-165, Cys-52–Cys-68, Cys-100–Cys-258, Cys-144–Cys-212, Cys-176–Cys-191, and Cys-202–Cys-227. A glycan (N-linked (GlcNAc...) asparagine) is linked at Asn-83.

This sequence belongs to the peptidase S1 family. Snake venom subfamily. In terms of tissue distribution, expressed by the venom gland.

It is found in the secreted. Snake venom serine protease homolog that may act in the hemostasis system of the prey. This is Snake venom serine protease homolog from Bothrops jararacussu (Jararacussu).